The primary structure comprises 291 residues: 33 kDa chaperonin (291 aa).

2 cysteine pairs are disulfide-bonded: cysteine 237–cysteine 239 and cysteine 270–cysteine 273.

This sequence belongs to the HSP33 family. Post-translationally, under oxidizing conditions two disulfide bonds are formed involving the reactive cysteines. Under reducing conditions zinc is bound to the reactive cysteines and the protein is inactive.

It localises to the cytoplasm. Redox regulated molecular chaperone. Protects both thermally unfolding and oxidatively damaged proteins from irreversible aggregation. Plays an important role in the bacterial defense system toward oxidative stress. This chain is 33 kDa chaperonin, found in Bacillus anthracis (strain A0248).